The chain runs to 261 residues: Ribosomal RNA small subunit methyltransferase J (261 aa).

Residues Arg101 to Asp102, Glu117 to Arg118, Ser153 to Ser154, and Asp176 each bind S-adenosyl-L-methionine.

The protein belongs to the methyltransferase superfamily. RsmJ family.

Its subcellular location is the cytoplasm. The catalysed reaction is guanosine(1516) in 16S rRNA + S-adenosyl-L-methionine = N(2)-methylguanosine(1516) in 16S rRNA + S-adenosyl-L-homocysteine + H(+). Its function is as follows. Specifically methylates the guanosine in position 1516 of 16S rRNA. The sequence is that of Ribosomal RNA small subunit methyltransferase J from Vibrio cholerae serotype O1 (strain ATCC 39315 / El Tor Inaba N16961).